The chain runs to 28 residues: Potassium channel toxin alpha-KTx 9.5 (28 aa).

3 disulfide bridges follow: cysteine 3-cysteine 19, cysteine 6-cysteine 24, and cysteine 10-cysteine 26. Valine amide is present on valine 28.

Expressed by the venom gland.

It localises to the secreted. Functionally, blocks voltage-gated potassium channels Kv1.1/KCNA1 (IC(50)=145 nM), Kv1.2/KCNA2 (IC(50)=2.5 nM), and Kv1.3/KCNA3 (IC(50)=15). Also inhibits calcium-activated potassium channels (KCa/KCNN). The chain is Potassium channel toxin alpha-KTx 9.5 from Buthus occitanus tunetanus (Common European scorpion).